The primary structure comprises 374 residues: C-X-C chemokine receptor type 5 (374 aa).

Topologically, residues 1-57 (MNYPLTLDMGSITYNMDDLYKELAFYSNSTEIPLQDSNFCSTVEGPLLTSFKAVFMP) are extracellular. An N-linked (GlcNAc...) asparagine glycan is attached at Asn-28. Residues 58–78 (VAYSLIFLLGMMGNILVLVIL) form a helical membrane-spanning segment. Over 79–90 (ERHRHTRSSTET) the chain is Cytoplasmic. The helical transmembrane segment at 91–111 (FLFHLAVADLLLVFILPFAVA) threads the bilayer. Over 112–126 (EGSVGWVLGTFLCKT) the chain is Extracellular. Cys-124 and Cys-204 are joined by a disulfide. Residues 127–147 (VIALHKINFYCSSLLLACIAV) traverse the membrane as a helical segment. Topologically, residues 148–169 (DRYLAIVHAVHAYRRRRLLSIH) are cytoplasmic. The helical transmembrane segment at 170-190 (ITCTAIWLAGFLFALPELLFA) threads the bilayer. Residues 191–221 (KVGQPHNNDSLPQCTFSQENEAETRAWFTSR) are Extracellular-facing. Asn-198 carries N-linked (GlcNAc...) asparagine glycosylation. A helical membrane pass occupies residues 222–242 (FLYHIGGFLLPMLVMGWCYVG). The Cytoplasmic segment spans residues 243 to 261 (VVHRLLQAQRRPQRQKAVR). A helical transmembrane segment spans residues 262–282 (VAILVTSIFFLCWSPYHIVIF). Residues 283–306 (LDTLERLKAVNSSCELSGYLSVAI) lie on the Extracellular side of the membrane. The chain crosses the membrane as a helical span at residues 307-327 (TLCEFLGLAHCCLNPMLYTFA). Over 328–374 (GVKFRSDLSRLLTKLGCAGPASLCQLFPNWRKSSLSESENATSLTTF) the chain is Cytoplasmic.

This sequence belongs to the G-protein coupled receptor 1 family. Mainly in spleen, in resting B-cells.

It is found in the cell membrane. In terms of biological role, cytokine receptor that binds to B-lymphocyte chemoattractant (BLC). Involved in B-cell migration into B-cell follicles of spleen and Peyer patches but not into those of mesenteric or peripheral lymph nodes. The sequence is that of C-X-C chemokine receptor type 5 (Cxcr5) from Mus musculus (Mouse).